The primary structure comprises 67 residues: MLLLSAVKTLLLAWLGIVLVFMSIIKSAMLDFLQEAGKLEGIETYKKEAQTSFMAPSWALGHLMGRK.

An N-terminal signal peptide occupies residues 1–30 (MLLLSAVKTLLLAWLGIVLVFMSIIKSAML). The propeptide occupies 31–49 (DFLQEAGKLEGIETYKKEA). The residue at position 50 (Gln-50) is a Pyrrolidone carboxylic acid. Residue Met-64 is modified to Methionine amide.

Expressed by the skin glands.

The protein localises to the secreted. Functionally, stimulates smooth muscle contraction in isolated rat stomach strip. The polypeptide is Bombesin (Rana shuchinae (Sichuan frog)).